A 132-amino-acid chain; its full sequence is ATP synthase epsilon chain (132 aa).

Belongs to the ATPase epsilon chain family. F-type ATPases have 2 components, CF(1) - the catalytic core - and CF(0) - the membrane proton channel. CF(1) has five subunits: alpha(3), beta(3), gamma(1), delta(1), epsilon(1). CF(0) has three main subunits: a, b and c.

Its subcellular location is the cell membrane. Produces ATP from ADP in the presence of a proton gradient across the membrane. In Bacillus sp. (strain PS3), this protein is ATP synthase epsilon chain (atpC).